The following is a 201-amino-acid chain: Probable quinol oxidase subunit 3 (201 aa).

5 helical membrane passes run 20-40, 62-82, 91-111, 133-153, and 172-192; these read LGFW…FATL, LVLI…IAIY, LMMF…GFEI, FFIL…WAIC, and FIVS…FTAV.

Belongs to the cytochrome c oxidase subunit 3 family.

The protein localises to the cell membrane. The catalysed reaction is 2 a quinol + O2 = 2 a quinone + 2 H2O. Catalyzes quinol oxidation with the concomitant reduction of oxygen to water. The protein is Probable quinol oxidase subunit 3 (qoxC) of Staphylococcus aureus (strain MSSA476).